A 380-amino-acid chain; its full sequence is 1-deoxy-D-xylulose 5-phosphate reductoisomerase (380 aa).

Residues threonine 10, glycine 11, serine 12, isoleucine 13, glycine 36, arginine 37, asparagine 38, and asparagine 120 each coordinate NADPH. 1-deoxy-D-xylulose 5-phosphate is bound at residue lysine 121. An NADPH-binding site is contributed by glutamate 122. Mn(2+) is bound at residue aspartate 146. 1-deoxy-D-xylulose 5-phosphate is bound by residues serine 147, glutamate 148, serine 172, and histidine 195. Glutamate 148 lines the Mn(2+) pocket. NADPH is bound at residue glycine 201. Serine 208, asparagine 213, lysine 214, and glutamate 217 together coordinate 1-deoxy-D-xylulose 5-phosphate. Residue glutamate 217 coordinates Mn(2+).

This sequence belongs to the DXR family. Requires Mg(2+) as cofactor. Mn(2+) serves as cofactor.

The enzyme catalyses 2-C-methyl-D-erythritol 4-phosphate + NADP(+) = 1-deoxy-D-xylulose 5-phosphate + NADPH + H(+). Its pathway is isoprenoid biosynthesis; isopentenyl diphosphate biosynthesis via DXP pathway; isopentenyl diphosphate from 1-deoxy-D-xylulose 5-phosphate: step 1/6. In terms of biological role, catalyzes the NADPH-dependent rearrangement and reduction of 1-deoxy-D-xylulose-5-phosphate (DXP) to 2-C-methyl-D-erythritol 4-phosphate (MEP). The protein is 1-deoxy-D-xylulose 5-phosphate reductoisomerase of Listeria innocua serovar 6a (strain ATCC BAA-680 / CLIP 11262).